Reading from the N-terminus, the 195-residue chain is Xanthine phosphoribosyltransferase (195 aa).

Leu-20 and Asn-27 together coordinate xanthine. 128–132 is a 5-phospho-alpha-D-ribose 1-diphosphate binding site; that stretch reads ANGQA. Lys-156 contributes to the xanthine binding site.

The protein belongs to the purine/pyrimidine phosphoribosyltransferase family. Xpt subfamily. As to quaternary structure, homodimer.

The protein localises to the cytoplasm. It carries out the reaction XMP + diphosphate = xanthine + 5-phospho-alpha-D-ribose 1-diphosphate. Its pathway is purine metabolism; XMP biosynthesis via salvage pathway; XMP from xanthine: step 1/1. Converts the preformed base xanthine, a product of nucleic acid breakdown, to xanthosine 5'-monophosphate (XMP), so it can be reused for RNA or DNA synthesis. This chain is Xanthine phosphoribosyltransferase, found in Latilactobacillus sakei subsp. sakei (strain 23K) (Lactobacillus sakei subsp. sakei).